Here is a 229-residue protein sequence, read N- to C-terminus: MTLNKTDRIVITLGKQIVHGKYVPGSPLPAEAELCEEFATSRNIIREVFRSLMAKRLIEMKRYRGAFVAPRNQWNYLDTDVLQWVLENDYDPRLISAMSEVRNLVEPAIARWAAERATSSDLAQIESALNEMIANNQDREAFNEADIRYHEAVLQSVHNPVLQQLSIAISSLQRAVFERTWMGDEANMPQTLQEHKALFDAIRHQDGDAAEQAALTMIASSTRRLKEIT.

The 71-residue stretch at 1-71 (MTLNKTDRIV…RYRGAFVAPR (71 aa)) folds into the HTH gntR-type domain. Residues 31 to 50 (EAELCEEFATSRNIIREVFR) constitute a DNA-binding region (H-T-H motif). Residues Asp-146, His-150, and His-195 each contribute to the Zn(2+) site.

As to quaternary structure, homodimer.

D-galactonate binds DgoR and induces a conformational change in the protein, which decreases its affinity for DNA and consequently derepresses transcription of the dgoRKADT operon. Involved in the regulation of D-galactonate metabolism. Represses the expression of the dgoRKADT operon by binding to two closely spaced inverted repeats in the cis-acting element, which overlap with the D-galactonate responsive dgo promoter. Employs a derepression mechanism using D-galactonate as a specific effector molecule. This chain is Galactonate operon transcriptional repressor, found in Escherichia coli (strain K12).